The primary structure comprises 87 residues: uncharacterized protein (87 aa).

This sequence to A.fulgidus AF_1348 and AF_1363.

This is an uncharacterized protein from Archaeoglobus fulgidus (strain ATCC 49558 / DSM 4304 / JCM 9628 / NBRC 100126 / VC-16).